The following is a 100-amino-acid chain: NAD(P)H-quinone oxidoreductase subunit 4L, chloroplastic (100 aa).

The next 3 membrane-spanning stretches (helical) occupy residues 1-21 (MLEHALISGAYLFSIGIYGLI), 29-49 (ALMCLELILNAVNVNLVTFSN), and 63-83 (IFVTAIAAAEAAIGLAIALAI).

The protein belongs to the complex I subunit 4L family. NDH is composed of at least 16 different subunits, 5 of which are encoded in the nucleus.

It is found in the plastid. The protein localises to the chloroplast thylakoid membrane. The catalysed reaction is a plastoquinone + NADH + (n+1) H(+)(in) = a plastoquinol + NAD(+) + n H(+)(out). It catalyses the reaction a plastoquinone + NADPH + (n+1) H(+)(in) = a plastoquinol + NADP(+) + n H(+)(out). Its function is as follows. NDH shuttles electrons from NAD(P)H:plastoquinone, via FMN and iron-sulfur (Fe-S) centers, to quinones in the photosynthetic chain and possibly in a chloroplast respiratory chain. The immediate electron acceptor for the enzyme in this species is believed to be plastoquinone. Couples the redox reaction to proton translocation, and thus conserves the redox energy in a proton gradient. The polypeptide is NAD(P)H-quinone oxidoreductase subunit 4L, chloroplastic (Cycas taitungensis (Prince sago)).